Consider the following 646-residue polypeptide: Threonine--tRNA ligase (646 aa).

The TGS domain occupies 1-61 (MIKITFPDGS…NEDADFVLYK (61 aa)). Residues 242-541 (DHRKIGKEMQ…LIEHTAGKFP (300 aa)) form a catalytic region. Positions 337, 388, and 518 each coordinate Zn(2+).

The protein belongs to the class-II aminoacyl-tRNA synthetase family. Homodimer. The cofactor is Zn(2+).

The protein localises to the cytoplasm. The catalysed reaction is tRNA(Thr) + L-threonine + ATP = L-threonyl-tRNA(Thr) + AMP + diphosphate + H(+). Functionally, catalyzes the attachment of threonine to tRNA(Thr) in a two-step reaction: L-threonine is first activated by ATP to form Thr-AMP and then transferred to the acceptor end of tRNA(Thr). Also edits incorrectly charged L-seryl-tRNA(Thr). The chain is Threonine--tRNA ligase from Bacteroides thetaiotaomicron (strain ATCC 29148 / DSM 2079 / JCM 5827 / CCUG 10774 / NCTC 10582 / VPI-5482 / E50).